The following is a 384-amino-acid chain: L-lactate dehydrogenase (384 aa).

An FMN hydroxy acid dehydrogenase domain is found at M1–K380. Y24 lines the substrate pocket. The FMN site is built by S106 and Q127. Y129 lines the substrate pocket. T155 contacts FMN. R164 provides a ligand contact to substrate. K251 contributes to the FMN binding site. H275 (proton acceptor) is an active-site residue. A substrate-binding site is contributed by R278. D306–R330 is a binding site for FMN.

It belongs to the FMN-dependent alpha-hydroxy acid dehydrogenase family. It depends on FMN as a cofactor.

Its subcellular location is the cell inner membrane. It catalyses the reaction (S)-lactate + A = pyruvate + AH2. In terms of biological role, catalyzes the conversion of L-lactate to pyruvate. Is coupled to the respiratory chain. The protein is L-lactate dehydrogenase of Acinetobacter baylyi (strain ATCC 33305 / BD413 / ADP1).